We begin with the raw amino-acid sequence, 144 residues long: Small ribosomal subunit protein bS6 (144 aa).

The interval 95 to 144 (ELEEGPSAMMQSKSRDDRPRRGEGDDRPRRDDREDRPRRDREPRRMEGGE) is disordered. Residues 107-144 (KSRDDRPRRGEGDDRPRRDDREDRPRRDREPRRMEGGE) are compositionally biased toward basic and acidic residues.

The protein belongs to the bacterial ribosomal protein bS6 family.

In terms of biological role, binds together with bS18 to 16S ribosomal RNA. The protein is Small ribosomal subunit protein bS6 of Paramagnetospirillum magneticum (strain ATCC 700264 / AMB-1) (Magnetospirillum magneticum).